The chain runs to 558 residues: Kelch-like protein 23 (558 aa).

Residues threonine 36 to glutamate 104 form the BTB domain. The 102-residue stretch at cysteine 139–glycine 240 folds into the BACK domain. 6 Kelch repeats span residues threonine 274 to proline 320, asparagine 321 to glycine 369, cysteine 370 to aspartate 416, isoleucine 418 to asparagine 466, lysine 467 to glycine 508, and isoleucine 510 to asparagine 557.

This Pongo abelii (Sumatran orangutan) protein is Kelch-like protein 23 (KLHL23).